A 131-amino-acid chain; its full sequence is Proteinase inhibitor (131 aa).

A signal peptide spans 1–26 (MSASAKLSRMVCLLCGFFSTGISMAS). Cysteines 51 and 74 form a disulfide.

This sequence belongs to the protease inhibitor I38 family.

Its subcellular location is the periplasm. Functionally, inhibitor of the alkaline protease. It forms a non-covalent bond with the protease and may prevent its autocatalytic cleavage in the periplasm. The protein is Proteinase inhibitor (inh) of Pseudomonas aeruginosa (strain ATCC 15692 / DSM 22644 / CIP 104116 / JCM 14847 / LMG 12228 / 1C / PRS 101 / PAO1).